The chain runs to 314 residues: L-lactate dehydrogenase (314 aa).

Residues Val-16, Asp-37, Lys-42, Tyr-68, and 82 to 83 (GV) each bind NAD(+). Substrate contacts are provided by Gln-85 and Arg-91. Residues Ser-104, 121-123 (ASN), and Thr-146 contribute to the NAD(+) site. 123–126 (NPVD) provides a ligand contact to substrate. 151 to 154 (DTTR) contributes to the substrate binding site. Beta-D-fructose 1,6-bisphosphate is bound by residues Arg-156 and His-171. His-178 serves as the catalytic Proton acceptor. Tyr-223 carries the post-translational modification Phosphotyrosine. Substrate is bound at residue Thr-232.

It belongs to the LDH/MDH superfamily. LDH family. Homotetramer.

Its subcellular location is the cytoplasm. It carries out the reaction (S)-lactate + NAD(+) = pyruvate + NADH + H(+). It functions in the pathway fermentation; pyruvate fermentation to lactate; (S)-lactate from pyruvate: step 1/1. Its activity is regulated as follows. Allosterically activated by fructose 1,6-bisphosphate (FBP). Functionally, catalyzes the conversion of lactate to pyruvate. This chain is L-lactate dehydrogenase, found in Lactococcus lactis subsp. cremoris (strain MG1363).